The following is a 261-amino-acid chain: 1-(5-phosphoribosyl)-5-[(5-phosphoribosylamino)methylideneamino] imidazole-4-carboxamide isomerase (261 aa).

The protein belongs to the HisA/HisF family.

It is found in the cytoplasm. The catalysed reaction is 1-(5-phospho-beta-D-ribosyl)-5-[(5-phospho-beta-D-ribosylamino)methylideneamino]imidazole-4-carboxamide = 5-[(5-phospho-1-deoxy-D-ribulos-1-ylimino)methylamino]-1-(5-phospho-beta-D-ribosyl)imidazole-4-carboxamide. It participates in amino-acid biosynthesis; L-histidine biosynthesis; L-histidine from 5-phospho-alpha-D-ribose 1-diphosphate: step 4/9. In terms of biological role, catalyzes the isomerization of the aminoaldose moiety of ProFAR to the aminoketose of PRFAR. The sequence is that of 1-(5-phosphoribosyl)-5-[(5-phosphoribosylamino)methylideneamino] imidazole-4-carboxamide isomerase from Saccharomyces cerevisiae (strain ATCC 204508 / S288c) (Baker's yeast).